Reading from the N-terminus, the 372-residue chain is Anhydro-N-acetylmuramic acid kinase (372 aa).

13-20 (GTSMDGID) is an ATP binding site.

Belongs to the anhydro-N-acetylmuramic acid kinase family.

The enzyme catalyses 1,6-anhydro-N-acetyl-beta-muramate + ATP + H2O = N-acetyl-D-muramate 6-phosphate + ADP + H(+). The protein operates within amino-sugar metabolism; 1,6-anhydro-N-acetylmuramate degradation. Its pathway is cell wall biogenesis; peptidoglycan recycling. Catalyzes the specific phosphorylation of 1,6-anhydro-N-acetylmuramic acid (anhMurNAc) with the simultaneous cleavage of the 1,6-anhydro ring, generating MurNAc-6-P. Is required for the utilization of anhMurNAc either imported from the medium or derived from its own cell wall murein, and thus plays a role in cell wall recycling. The chain is Anhydro-N-acetylmuramic acid kinase from Rhizobium johnstonii (strain DSM 114642 / LMG 32736 / 3841) (Rhizobium leguminosarum bv. viciae).